A 462-amino-acid chain; its full sequence is Glycine--tRNA ligase (462 aa).

2 residues coordinate substrate: Arg-100 and Glu-174. ATP contacts are provided by residues 206-208 (RNE), 216-221 (FRTREF), 290-291 (EL), and 334-337 (GVDR). 221–225 (FEQME) is a substrate binding site. 330-334 (EPSVG) contacts substrate.

Belongs to the class-II aminoacyl-tRNA synthetase family. In terms of assembly, homodimer.

It is found in the cytoplasm. The catalysed reaction is tRNA(Gly) + glycine + ATP = glycyl-tRNA(Gly) + AMP + diphosphate. In terms of biological role, catalyzes the attachment of glycine to tRNA(Gly). The polypeptide is Glycine--tRNA ligase (Alkaliphilus oremlandii (strain OhILAs) (Clostridium oremlandii (strain OhILAs))).